A 790-amino-acid polypeptide reads, in one-letter code: AMP deaminase (790 aa).

The segment covering 1–14 (MSTPLRGSSPQVSF) has biased composition (polar residues). The disordered stretch occupies residues 1–26 (MSTPLRGSSPQVSFYESELDQEGGSD). Zn(2+) contacts are provided by H221 and H223. Residues H223 and 292–297 (KFNLKY) each bind substrate. H488 contacts Zn(2+). E491 provides a ligand contact to substrate. The active-site Proton acceptor is the H510. A Zn(2+)-binding site is contributed by D565. 566 to 569 (DPLQ) contacts substrate. 2 disordered regions span residues 698 to 726 (NKLR…SSPG) and 739 to 790 (PPPL…KSDK). 2 stretches are compositionally biased toward low complexity: residues 706–726 (GSTP…SSPG) and 750–781 (NNNN…TTTN).

Belongs to the metallo-dependent hydrolases superfamily. Adenosine and AMP deaminases family. As to quaternary structure, homodimer. It depends on Zn(2+) as a cofactor.

The protein localises to the cytoplasm. The catalysed reaction is AMP + H2O + H(+) = IMP + NH4(+). The protein operates within purine metabolism; IMP biosynthesis via salvage pathway; IMP from AMP: step 1/1. Activated by ATP, inhibited by GTP, EDTA and inorganic phosphate. Functionally, catalyzes the conversion of adenosine monophosphate (AMP) to inosine monophosphate (IMP) and ammonia (NH4(+)). Participates in the regulation of the adenylated nucleotide pool and the interconversion to guanylated nucleotides during early morphodifferentiation. In Dictyostelium discoideum (Social amoeba), this protein is AMP deaminase (amdA).